The sequence spans 712 residues: tRNA 5-methylaminomethyl-2-thiouridine biosynthesis bifunctional protein MnmC (712 aa).

A tRNA (mnm(5)s(2)U34)-methyltransferase region spans residues 1–268 (MPNMRHRVNS…RRALRHAQSD (268 aa)). The FAD-dependent cmnm(5)s(2)U34 oxidoreductase stretch occupies residues 292–712 (IGGGVASTHL…MRKLIKGKAL (421 aa)).

It in the N-terminal section; belongs to the methyltransferase superfamily. tRNA (mnm(5)s(2)U34)-methyltransferase family. This sequence in the C-terminal section; belongs to the DAO family. FAD is required as a cofactor.

It is found in the cytoplasm. The catalysed reaction is 5-aminomethyl-2-thiouridine(34) in tRNA + S-adenosyl-L-methionine = 5-methylaminomethyl-2-thiouridine(34) in tRNA + S-adenosyl-L-homocysteine + H(+). Its function is as follows. Catalyzes the last two steps in the biosynthesis of 5-methylaminomethyl-2-thiouridine (mnm(5)s(2)U) at the wobble position (U34) in tRNA. Catalyzes the FAD-dependent demodification of cmnm(5)s(2)U34 to nm(5)s(2)U34, followed by the transfer of a methyl group from S-adenosyl-L-methionine to nm(5)s(2)U34, to form mnm(5)s(2)U34. The polypeptide is tRNA 5-methylaminomethyl-2-thiouridine biosynthesis bifunctional protein MnmC (Shewanella sediminis (strain HAW-EB3)).